We begin with the raw amino-acid sequence, 780 residues long: MAPALSRSLYTSPLTSVPITPVSSRLSHLRSSFLPHGGALRTGVSCSWNLEKRCNRFAVKCDAAVAEKETTEEGSGEKFEYQAEVSRLLDLIVHSLYSHKEVFLRELVSNASDALDKLRFLSVTEPSLLGDGGDLEIRIKPDPDNGTITITDTGIGMTKEELIDCLGTIAQSGTSKFLKALKENKDLGADNGLIGQFGVGFYSAFLVAEKVVVSTKSPKSDKQYVWESVADSSSYLIREETDPDNILRRGTQITLYLREDDKYEFAESTRIKNLVKNYSQFVGFPIYTWQEKSRTIEVEEDEPVKEGEEGEPKKKKTTKTEKYWDWELANETKPLWMRNSKEVEKGEYNEFYKKAFNEFLDPLAHTHFTTEGEVEFRSILYIPGMGPLNNEDVTNPKTKNIRLYVKRVFISDDFDGELFPRYLSFVKGVVDSDDLPLNVSREILQESRIVRIMRKRLIRKTFDMIQEISESENKEDYKKFWENFGRFLKLGCIEDTGNHKRITPLLRFFSSKNEEELTSLDDYIENMGENQKAIYYLATDSLKSAKSAPFLEKLIQKDIEVLYLVEPIDEVAIQNLQTYKEKKFVDISKEDLELGDEDEVKDREAKQEFNLLCDWIKQQLGDKVAKVQVSNRLSSSPCVLVSGKFGWSANMERLMKAQALGDTSSLEFMRGRRILEINPDHPIIKDLNAACKNAPESTEATRVVDLLYDTAIISSGFTPDSPAELGNKIYEMMAMAVGGRWGRVEEEEESSTVNEGDDKSGETEVVEPSEVRAESDPWQD.

The transit peptide at 1–60 (MAPALSRSLYTSPLTSVPITPVSSRLSHLRSSFLPHGGALRTGVSCSWNLEKRCNRFAVK) directs the protein to the chloroplast. Residues E106, N110, D152, M157, 172-173 (SG), 196-201 (QFGVGF), T251, and R441 contribute to the ATP site. Residues 742–780 (GRVEEEEESSTVNEGDDKSGETEVVEPSEVRAESDPWQD) form a disordered region. Over residues 769 to 780 (SEVRAESDPWQD) the composition is skewed to basic and acidic residues.

Belongs to the heat shock protein 90 family. In terms of assembly, homodimer. Interacts with VIPP1. Interacts with P23-1. As to expression, expressed in roots, cotyledons, young leaves, mature leaves, stems, flowers, petals and siliques.

It localises to the plastid. Its subcellular location is the chloroplast stroma. Functionally, molecular chaperone required for chloroplast biogenesis. Essential for chloroplast biogenesis and maintenance, and thus for embryogenesis. May be involved in the disassembly of VIPP1 for thylakoid membrane formation and/or maintenance. Cooperates with TIC components and other molecular chaperones to drive transport of preproteins into chloroplasts and functions in the chloroplast stroma to facilitate membrane translocation during protein import into the organelle. This Arabidopsis thaliana (Mouse-ear cress) protein is Heat shock protein 90-5, chloroplastic.